A 247-amino-acid chain; its full sequence is MRILVSNDDGYFAPGIAALAAALGELGDVTVVAPERDRSGASNSLTLDRPLSLRRAANGFFFVNGTPTDCVHLAVTGMLDQLPDMVVSGVNHGANMGDDTLYSGTVAAATEGYLLGIPSIAVSLASWSATDFSVAAQVARDVAARLMRSPLPAPVLLNVNVPDCAGGAPKGTRVTRLGKRHKAEPVIRSQTPRGETVYWVGAAGAAADAGEGTDFHAVANGFVSVTPLQVDLTHTGQIAAVDTWLSA.

The a divalent metal cation site is built by Asp-8, Asp-9, Ser-39, and Asn-91.

This sequence belongs to the SurE nucleotidase family. A divalent metal cation is required as a cofactor.

Its subcellular location is the cytoplasm. It carries out the reaction a ribonucleoside 5'-phosphate + H2O = a ribonucleoside + phosphate. Nucleotidase that shows phosphatase activity on nucleoside 5'-monophosphates. The chain is 5'-nucleotidase SurE from Azoarcus sp. (strain BH72).